A 139-amino-acid chain; its full sequence is Aspartate 1-decarboxylase (139 aa).

The Schiff-base intermediate with substrate; via pyruvic acid role is filled by Ser25. The residue at position 25 (Ser25) is a Pyruvic acid (Ser). Thr57 contacts substrate. Tyr58 acts as the Proton donor in catalysis. 73-75 contacts substrate; sequence GAA. Residues 117–139 form a disordered region; the sequence is LGADPAEPVPGSDQARSPQAVTA. A compositionally biased stretch (polar residues) spans 130-139; the sequence is QARSPQAVTA.

It belongs to the PanD family. As to quaternary structure, heterooctamer of four alpha and four beta subunits. Requires pyruvate as cofactor. Is synthesized initially as an inactive proenzyme, which is activated by self-cleavage at a specific serine bond to produce a beta-subunit with a hydroxyl group at its C-terminus and an alpha-subunit with a pyruvoyl group at its N-terminus.

It localises to the cytoplasm. The catalysed reaction is L-aspartate + H(+) = beta-alanine + CO2. The protein operates within cofactor biosynthesis; (R)-pantothenate biosynthesis; beta-alanine from L-aspartate: step 1/1. Catalyzes the pyruvoyl-dependent decarboxylation of aspartate to produce beta-alanine. In Streptomyces avermitilis (strain ATCC 31267 / DSM 46492 / JCM 5070 / NBRC 14893 / NCIMB 12804 / NRRL 8165 / MA-4680), this protein is Aspartate 1-decarboxylase.